An 889-amino-acid polypeptide reads, in one-letter code: MAQGDPGGQTPQAPQGTDKKPDEPKATEKPQGAGPQPRDPPGGEKGLRDPPGGEKGPRDPGQGGAGEALAEALYGLGRPVLRAVLYLFPVYLCGRFGLSPTWLLFGLFLWMFWTRNKKFKLARIQAAWDLHENEKLGVTRGLYLQQLPAWVNFPDVERVEWLNKVVGQMWPYIGMYVEKMFQDKVEPLVRSSSAHLKAFTFTKVHLGEKFPRINGVKSYTKNVDKREVILDLQLSYNGDVEINVEVKKMCKAGVKGVQLHGTLRVILAPLLPDLPFVGAVTMFFIQRPHLDINWTGLTNVLEIPGVSDFSDSMIVDMIASHLVLPNRFTVPLSSQVQAAQLRFPLPHGVLRLHLIEAEDLIPKDNYLKGIIRGKSDPYAVLRIGNQNFKSRTIKENLNPKWGEMYEFVVHEVPGQDLEVDLYDEDPDKDDFLGSLVIGLEGVMQDRVVDEWFPLSDVPSGSVHLRLEWLSLLPKSEKLSEAKGGISTAMLIVYLDSASALPRNHFEYSSSEYTTRKQRHMTYTKTDKDPNSYVLMSVGKKSVKSKTCTGSTEPVWGQAFAFFIQDVHMQHLHLEVKDSERQCALGMLDLPLHRLLGNEELTADQRFPLANSGPNSTIKMKIVLRVLHVEAPEPESIYTGINSLKQGPVSIKRAQSQQHKSHGKSHQAHHQAHQTQQNHTVQQPKAERKESISTTSQQANTSSSNPAPNQNPNSTGAVPESHTPSLKPLERIAPSLLSLNSIGSSVFDPNDKRWPSEMTGEVEVSVRYASLRRCLVVLINSCRNLIQCSSNGADPYVRIYLLPDRKWSGRKKTSVKRKTLNPQYNERFEFLVSQEEAKKRMLDVAVKNNRGFGSHERKELGKVLVDLSCDDLVKGFTKWFELTPTGLPTS.

Residues 1 to 65 (MAQGDPGGQT…GPRDPGQGGA (65 aa)) are disordered. The Cytoplasmic segment spans residues 1–66 (MAQGDPGGQT…PRDPGQGGAG (66 aa)). Composition is skewed to basic and acidic residues over residues 17–28 (TDKKPDEPKATE) and 41–58 (PGGEKGLRDPPGGEKGPR). Transmembrane regions (helical) follow at residues 67-91 (EALAEALYGLGRPVLRAVLYLFPVY) and 92-112 (LCGRFGLSPTWLLFGLFLWMF). Topologically, residues 113 to 889 (WTRNKKFKLA…ELTPTGLPTS (777 aa)) are cytoplasmic. Residues 155–333 (DVERVEWLNK…LPNRFTVPLS (179 aa)) enclose the SMP-LTD domain. 2 C2 domains span residues 331–452 (PLSS…DEWF) and 468–618 (WLSL…STIK). The Ca(2+) site is built by lysine 363, aspartate 364, aspartate 376, aspartate 423, glutamate 424, aspartate 425, aspartate 427, aspartate 429, and aspartate 430. Residues 649-724 (SIKRAQSQQH…GAVPESHTPS (76 aa)) form a disordered region. The segment covering 658–671 (HKSHGKSHQAHHQA) has biased composition (basic residues). Composition is skewed to low complexity over residues 672–682 (HQTQQNHTVQQ) and 691–714 (ISTTSQQANTSSSNPAPNQNPNST). The 123-residue stretch at 757–879 (MTGEVEVSVR…DLVKGFTKWF (123 aa)) folds into the C2 3 domain. Residues 804–811 (RKWSGRKK) form a required for phosphatidylinositol 4,5-bisphosphate-dependent location at the cell membrane region.

It belongs to the extended synaptotagmin family.

The protein resides in the cell membrane. It is found in the endoplasmic reticulum membrane. Its function is as follows. Tethers the endoplasmic reticulum to the cell membrane and promotes the formation of appositions between the endoplasmic reticulum and the cell membrane. Binds glycerophospholipids in a barrel-like domain and may play a role in cellular lipid transport. The sequence is that of Extended synaptotagmin-3 (esyt3) from Xenopus tropicalis (Western clawed frog).